The primary structure comprises 165 residues: Small ribosomal subunit protein uS5 (165 aa).

The S5 DRBM domain maps to 13-76 (LEEKVLVVNR…EAARKNLITI (64 aa)).

The protein belongs to the universal ribosomal protein uS5 family. As to quaternary structure, part of the 30S ribosomal subunit. Contacts proteins S4 and S8.

Its function is as follows. With S4 and S12 plays an important role in translational accuracy. Located at the back of the 30S subunit body where it stabilizes the conformation of the head with respect to the body. The sequence is that of Small ribosomal subunit protein uS5 from Chlamydia abortus (strain DSM 27085 / S26/3) (Chlamydophila abortus).